The sequence spans 287 residues: Pantothenate synthetase (287 aa).

Met-30–His-37 is an ATP binding site. The active-site Proton donor is the His-37. Gln-61 is a binding site for (R)-pantoate. Residue Gln-61 coordinates beta-alanine. Gly-148–Asp-151 provides a ligand contact to ATP. Gln-154 is a (R)-pantoate binding site. ATP is bound by residues Ile-177 and Leu-185 to Arg-188.

Belongs to the pantothenate synthetase family. Homodimer.

It is found in the cytoplasm. The catalysed reaction is (R)-pantoate + beta-alanine + ATP = (R)-pantothenate + AMP + diphosphate + H(+). The protein operates within cofactor biosynthesis; (R)-pantothenate biosynthesis; (R)-pantothenate from (R)-pantoate and beta-alanine: step 1/1. Functionally, catalyzes the condensation of pantoate with beta-alanine in an ATP-dependent reaction via a pantoyl-adenylate intermediate. The sequence is that of Pantothenate synthetase from Psychrobacter cryohalolentis (strain ATCC BAA-1226 / DSM 17306 / VKM B-2378 / K5).